The primary structure comprises 95 residues: MLKKGKKTGSNSSGGTAYSPLAYLKRPYFRRSKACPLEQCANEDIDYKNKALLSKFTSEYGRILPSRITSVSSRKQRLLSTAIKRARYLALLPYC.

It belongs to the bacterial ribosomal protein bS18 family. In terms of assembly, part of the 30S ribosomal subunit. Forms a tight heterodimer with protein bS6.

Binds as a heterodimer with protein bS6 to the central domain of the 16S rRNA, where it helps stabilize the platform of the 30S subunit. This Ehrlichia ruminantium (strain Gardel) protein is Small ribosomal subunit protein bS18.